Consider the following 165-residue polypeptide: Large ribosomal subunit protein uL10 (165 aa).

The protein belongs to the universal ribosomal protein uL10 family. As to quaternary structure, part of the ribosomal stalk of the 50S ribosomal subunit. The N-terminus interacts with L11 and the large rRNA to form the base of the stalk. The C-terminus forms an elongated spine to which L12 dimers bind in a sequential fashion forming a multimeric L10(L12)X complex.

Forms part of the ribosomal stalk, playing a central role in the interaction of the ribosome with GTP-bound translation factors. This Enterobacter sp. (strain 638) protein is Large ribosomal subunit protein uL10.